Here is a 70-residue protein sequence, read N- to C-terminus: MVELKVKTEMDVDRNLCNYCGACVGMCPTDAIWLDETVIKIHEEKCIECGFCIVGCPTGAITAEWFHGNL.

4Fe-4S ferredoxin-type domains lie at 8–36 (TEMD…WLDE) and 37–66 (TVIK…AEWF). Cys-17, Cys-20, Cys-23, Cys-27, Cys-46, Cys-49, Cys-52, and Cys-56 together coordinate [4Fe-4S] cluster.

[4Fe-4S] cluster serves as cofactor.

Functionally, ferredoxins are iron-sulfur proteins that transfer electrons in a wide variety of metabolic reactions. In Thermoplasma acidophilum (strain ATCC 25905 / DSM 1728 / JCM 9062 / NBRC 15155 / AMRC-C165), this protein is Probable ferredoxin TA0517.